Here is a 529-residue protein sequence, read N- to C-terminus: Putative E3 ubiquitin-protein ligase ARI4 (529 aa).

Residues 1-22 show a composition bias toward acidic residues; that stretch reads MDDEYMSLEEEEDNCYPSEFDD. The tract at residues 1–23 is disordered; that stretch reads MDDEYMSLEEEEDNCYPSEFDDH. The segment at 115 to 327 is TRIAD supradomain; that stretch reads KTMKCDICME…IAGHSCGRYK (213 aa). Zn(2+)-binding residues include Cys119, Cys122, Cys137, His139, Cys142, Cys145, Cys164, Cys169, Cys206, Cys212, Cys230, Cys232, Cys237, Cys240, His245, Cys250, Cys277, and Cys280. The segment at 119-169 adopts an RING-type 1 zinc-finger fold; that stretch reads CDICMEEDLSKYAMTRMECGHRFCNDCWKEHFTVRINEGEGKRIRCMAYKC. The IBR-type zinc-finger motif lies at 186–250; that stretch reads EKFDRFLIES…LSESHSPCSC (65 aa). The RING-type 2; atypical zinc-finger motif lies at 277–305; sequence CPKCSKPIQKRDGCNHMTCKCGQHFCWLC. Cys290 is an active-site residue. Zn(2+) contacts are provided by Cys295, Cys297, Cys302, Cys305, His313, and Cys323.

This sequence belongs to the RBR family. Ariadne subfamily. Zn(2+) is required as a cofactor.

It catalyses the reaction [E2 ubiquitin-conjugating enzyme]-S-ubiquitinyl-L-cysteine + [acceptor protein]-L-lysine = [E2 ubiquitin-conjugating enzyme]-L-cysteine + [acceptor protein]-N(6)-ubiquitinyl-L-lysine.. Its pathway is protein modification; protein ubiquitination. In terms of biological role, might act as an E3 ubiquitin-protein ligase, or as part of E3 complex, which accepts ubiquitin from specific E2 ubiquitin-conjugating enzymes and then transfers it to substrates. The sequence is that of Putative E3 ubiquitin-protein ligase ARI4 (ARI4) from Arabidopsis thaliana (Mouse-ear cress).